A 115-amino-acid chain; its full sequence is Evasin P1182 (115 aa).

A signal peptide spans 1 to 26 (MALNWSFRVIFVSTMWCALLKFATLG). Intrachain disulfides connect cysteine 38–cysteine 58, cysteine 54–cysteine 94, cysteine 70–cysteine 99, and cysteine 89–cysteine 108. N-linked (GlcNAc...) asparagine glycans are attached at residues asparagine 45, asparagine 72, and asparagine 103.

It is found in the secreted. In terms of biological role, salivary chemokine-binding protein which binds to host chemokines CCL2, CCL3, CCL4, CCL8 and CCL18. The protein is Evasin P1182 of Amblyomma maculatum (Gulf Coast tick).